Here is a 211-residue protein sequence, read N- to C-terminus: MSHGHSHGGGGCRCAAEREEPPEQRGLAYGLYLRIDLERLQCLNESREGSGRGVFKPWEERTDRSKFVESDADEELLFNIPFTGNVKLKGVIIMGEDDDSHPSEMRLYKNIPQMSFDDTEREPEQTFSLNRDITGELEYATKISRFSNVYHLSIHISKNFGADTTKIFYIGLRGEWTELRRHEVTICNYEASANPADHRVHQVTPQTHFIS.

The interval 1 to 20 is disordered; sequence MSHGHSHGGGGCRCAAEREE. The 173-residue stretch at 20 to 192 folds into the PITH domain; sequence EPPEQRGLAY…EVTICNYEAS (173 aa). A Phosphotyrosine modification is found at tyrosine 189.

The protein belongs to the PITHD1 family.

Its subcellular location is the cytoplasm. In terms of biological role, promotes megakaryocyte differentiation by up-regulating RUNX1 expression. Regulates RUNX1 expression by activating the proximal promoter of the RUNX1 gene and by enhancing the translation activity of an internal ribosome entry site (IRES) element in the RUNX1 gene. This Mus musculus (Mouse) protein is PITH domain-containing protein 1 (Pithd1).